The sequence spans 89 residues: Cornifin (89 aa).

Residues 1–29 form a disordered region; sequence MSSQQQKQPCTPPPQLQQQQVKQPCQPPP. The residue at position 2 (Ser-2) is an N-acetylserine. Tandem repeats lie at residues 3–14, 18–29, 31–38, 39–46, 47–54, 55–62, 63–70, and 71–78. The 2 X 12 AA approximate repeats stretch occupies residues 3-29; it reads SQQQKQPCTPPPQLQQQQVKQPCQPPP. The 6 X 8 AA approximate tandem repeats stretch occupies residues 31 to 78; it reads EPCIPKTKEPCLPKVPEPCHPKVPEPCQPKVPEPCHPKVPEPCPSTVT. Residues 68 to 89 form a disordered region; it reads KVPEPCPSTVTPAPAQQKTKQK. Over residues 75–89 the composition is skewed to polar residues; the sequence is STVTPAPAQQKTKQK.

It belongs to the cornifin (SPRR) family.

The protein localises to the cytoplasm. Cross-linked envelope protein of keratinocytes. It is a keratinocyte protein that first appears in the cell cytosol, but ultimately becomes cross-linked to membrane proteins by transglutaminase. All that results in the formation of an insoluble envelope beneath the plasma membrane. The chain is Cornifin (SPRR1) from Macaca mulatta (Rhesus macaque).